A 74-amino-acid polypeptide reads, in one-letter code: IMFVWASAAEVEERGSDQRDSPASLKSMETIFQSEQRECRYLMGGCSKDGDCCEHLVCRTKWPYHCVWDWTFGK.

The first 7 residues, 1–7 (IMFVWAS), serve as a signal peptide directing secretion. Positions 8 to 36 (AAEVEERGSDQRDSPASLKSMETIFQSEQ) are excised as a propeptide. 3 disulfides stabilise this stretch: Cys-39–Cys-53, Cys-46–Cys-58, and Cys-52–Cys-66.

It belongs to the neurotoxin 10 (Hwtx-1) family. 38 (Jztx-33) subfamily. Expressed by the venom gland.

Its subcellular location is the secreted. Probable ion channel inhibitor. This is U19-theraphotoxin-Cg1a from Chilobrachys guangxiensis (Chinese earth tiger tarantula).